The sequence spans 333 residues: Homeobox protein engrailed-1 (333 aa).

A compositionally biased stretch (basic and acidic residues) spans 1–14; sequence MEEPPEGHGHHRDA. Disordered stretches follow at residues 1-184 and 226-247; these read MEEP…AAKY and RPSS…DKRP. The span at 20–31 shows a compositional bias: gly residues; sequence ANGGGGGGGGSD. Positions 38–66 are enriched in pro residues; sequence SPSPAPASPAAPCPLPLPRRRPPPPPPPR. Residues 94–104 show a composition bias toward gly residues; it reads TGAGGGGGGGG. Positions 144–173 are enriched in low complexity; the sequence is DGSAPAGTAAKANPGTAAGAAGAAGAAKAQ. A DNA-binding region (homeobox) is located at residues 244–303; the sequence is DKRPRTAFTAEQLQRLKAEFQANRYITEQRRQSLAQELSLNESRVKIWFQNKRAKIKKAT.

It belongs to the engrailed homeobox family.

The protein localises to the nucleus. Functionally, required for proper formation of the apical ectodermal ridge and correct dorsal-ventral patterning in the limb. This is Homeobox protein engrailed-1 (EN1) from Gallus gallus (Chicken).